We begin with the raw amino-acid sequence, 173 residues long: ATP-dependent protease subunit HslV (173 aa).

Thr2 is an active-site residue. 3 residues coordinate Na(+): Gly158, Asp161, and Thr164.

It belongs to the peptidase T1B family. HslV subfamily. As to quaternary structure, a double ring-shaped homohexamer of HslV is capped on each side by a ring-shaped HslU homohexamer. The assembly of the HslU/HslV complex is dependent on binding of ATP.

Its subcellular location is the cytoplasm. The catalysed reaction is ATP-dependent cleavage of peptide bonds with broad specificity.. With respect to regulation, allosterically activated by HslU binding. Functionally, protease subunit of a proteasome-like degradation complex believed to be a general protein degrading machinery. The sequence is that of ATP-dependent protease subunit HslV from Mannheimia succiniciproducens (strain KCTC 0769BP / MBEL55E).